Here is a 370-residue protein sequence, read N- to C-terminus: 3-dehydroquinate synthase (370 aa).

Residues 108 to 112 (GVIGD), 132 to 133 (TT), Lys145, and Lys154 contribute to the NAD(+) site. Residues Glu187, His249, and His267 each coordinate Zn(2+).

This sequence belongs to the sugar phosphate cyclases superfamily. Dehydroquinate synthase family. The cofactor is Co(2+). Requires Zn(2+) as cofactor. NAD(+) is required as a cofactor.

The protein resides in the cytoplasm. It catalyses the reaction 7-phospho-2-dehydro-3-deoxy-D-arabino-heptonate = 3-dehydroquinate + phosphate. It functions in the pathway metabolic intermediate biosynthesis; chorismate biosynthesis; chorismate from D-erythrose 4-phosphate and phosphoenolpyruvate: step 2/7. Functionally, catalyzes the conversion of 3-deoxy-D-arabino-heptulosonate 7-phosphate (DAHP) to dehydroquinate (DHQ). The sequence is that of 3-dehydroquinate synthase from Cereibacter sphaeroides (strain ATCC 17025 / ATH 2.4.3) (Rhodobacter sphaeroides).